The sequence spans 753 residues: 5-methyltetrahydropteroyltriglutamate--homocysteine methyltransferase (753 aa).

5-methyltetrahydropteroyltri-L-glutamate is bound by residues 17–20 (RELK) and K117. Residues 431–433 (IGS) and E484 contribute to the L-homocysteine site. L-methionine is bound by residues 431–433 (IGS) and E484. Residues 515–516 (RC) and W561 contribute to the 5-methyltetrahydropteroyltri-L-glutamate site. Residue D599 coordinates L-homocysteine. D599 is an L-methionine binding site. E605 is a binding site for 5-methyltetrahydropteroyltri-L-glutamate. Zn(2+)-binding residues include H641, C643, and E665. H694 serves as the catalytic Proton donor. Residue C726 coordinates Zn(2+).

The protein belongs to the vitamin-B12 independent methionine synthase family. It depends on Zn(2+) as a cofactor.

The catalysed reaction is 5-methyltetrahydropteroyltri-L-glutamate + L-homocysteine = tetrahydropteroyltri-L-glutamate + L-methionine. It functions in the pathway amino-acid biosynthesis; L-methionine biosynthesis via de novo pathway; L-methionine from L-homocysteine (MetE route): step 1/1. Its function is as follows. Catalyzes the transfer of a methyl group from 5-methyltetrahydrofolate to homocysteine resulting in methionine formation. The protein is 5-methyltetrahydropteroyltriglutamate--homocysteine methyltransferase of Escherichia coli O7:K1 (strain IAI39 / ExPEC).